Consider the following 565-residue polypeptide: MAQRIFTLILLLCSTSVFAGLFDAPGRSQFVPADQAFAFDFQQNQHDLNLTWQIKDGYYLYRKQIRITPEHAKIADEQLPQGVWHEDEFYGKSEIYRDRLTLPVTINQASAGATLTVTYQGCADAGFCYPPETKTVPLSEVVANNAASQPVSVSQQEQHTAQLPFSALWALLIGIGIAFTPCVLPMYPLISGIVLGGKQRLSTARALLLTFIYVQGMALTYTALGLVVAAAGLQFQAALQHPYVLIGLAIVFTLLAMSMFGLFTLQLPSSLQTRLTLMSNRQQGGSPGGVFVMGAIAGLICSPCTTAPLSAILLYIAQSGNMWLGGGTLYLYALGMGLPLMLITVFGNRLLPKSGPWMEQVKTAFGFVILALPVFLLERVIGDVWGLRLWSALGVAFFGWAFITSLQAKRGWMRVVQIILLAAALVSVRPLQDWAFGATHTAQTQTHLNFTQIKTVDELNHALVEAKGKPVMLDLYADWCVACKEFEKYTFSDPQVQKALADTVLLQANITANDAQDVALLKHLNVLGLPTILFFDGQGQEHPQARVTGFMDAETFSAHLRDRQP.

The signal sequence occupies residues 1–19 (MAQRIFTLILLLCSTSVFA). 2 disulfides stabilise this stretch: Cys122/Cys128 and Cys182/Cys304. Helical transmembrane passes span 163–183 (LPFS…TPCV), 208–228 (LLTF…GLVV), 243–263 (YVLI…FGLF), 296–316 (IAGL…LLYI), 323–343 (WLGG…LMLI), 357–377 (WMEQ…VFLL), and 384–404 (VWGL…AFIT). The region spanning 434 to 565 (WAFGATHTAQ…FSAHLRDRQP (132 aa)) is the Thioredoxin domain. Cysteines 480 and 483 form a disulfide.

This sequence belongs to the thioredoxin family. DsbD subfamily.

It localises to the cell inner membrane. The enzyme catalyses [protein]-dithiol + NAD(+) = [protein]-disulfide + NADH + H(+). The catalysed reaction is [protein]-dithiol + NADP(+) = [protein]-disulfide + NADPH + H(+). Functionally, required to facilitate the formation of correct disulfide bonds in some periplasmic proteins and for the assembly of the periplasmic c-type cytochromes. Acts by transferring electrons from cytoplasmic thioredoxin to the periplasm. This transfer involves a cascade of disulfide bond formation and reduction steps. The sequence is that of Thiol:disulfide interchange protein DsbD from Shigella boydii serotype 4 (strain Sb227).